We begin with the raw amino-acid sequence, 135 residues long: Protein PsiE homolog (135 aa).

A run of 4 helical transmembrane segments spans residues 20–40 (VGLIALAAILVVFLIKETFHL), 54–74 (YMLIEGIVIYFLYFEFIALIV), 82–102 (HFPLRYFIYIGITAIIRLIIV), and 107–127 (PIDTLIYSGSILLLVVTLYLA).

It belongs to the PsiE family.

It localises to the cell inner membrane. This Yersinia enterocolitica serotype O:8 / biotype 1B (strain NCTC 13174 / 8081) protein is Protein PsiE homolog.